Reading from the N-terminus, the 128-residue chain is MATSMLGSLLRIVRQVVPSSASGQARSYYVDWRMLRDVKRRKMAYEYADERLRINSLRKNTILPKHLQEVADEEIAALPRDSCPVRIRNRCVMTSRPRGVKRRWRLSRIVFRHLADHGQLSGIQRAIW.

It belongs to the universal ribosomal protein uS14 family. In terms of assembly, component of the mitochondrial ribosome small subunit (28S) which comprises a 12S rRNA and about 30 distinct proteins. Interacts with LIAT1.

The protein localises to the mitochondrion. The chain is Small ribosomal subunit protein uS14m (MRPS14) from Bos taurus (Bovine).